The chain runs to 81 residues: Small ribosomal subunit protein uS15 (81 aa).

This sequence belongs to the universal ribosomal protein uS15 family. Part of the 30S ribosomal subunit. Forms a bridge to the 50S subunit in the 70S ribosome, contacting the 23S rRNA.

Functionally, one of the primary rRNA binding proteins, it binds directly to 16S rRNA where it helps nucleate assembly of the platform of the 30S subunit by binding and bridging several RNA helices of the 16S rRNA. Its function is as follows. Forms an intersubunit bridge (bridge B4) with the 23S rRNA of the 50S subunit in the ribosome. The chain is Small ribosomal subunit protein uS15 from Mesomycoplasma hyorhinis (Mycoplasma hyorhinis).